The following is a 628-amino-acid chain: Kinesin-like protein tea2 (628 aa).

An interaction with mal3 region spans residues 2–122 (SSSSSKPVNT…TTSQQTNSKG (121 aa)). Phosphoserine is present on Ser82. Residues 132–460 (GIITSIRIRP…LKFASRAQNL (329 aa)) form the Kinesin motor domain. 218–225 (GMTGTGKT) contacts ATP. Positions 530–557 (LRMEELLSDHNFEIADLRDELQDKEQII) form a coiled coil. Positions 588-628 (VTRGSRSSSDQFSNETKTEILPDDQQQSKKDSVTQETQLLS) are disordered. The segment covering 589 to 602 (TRGSRSSSDQFSNE) has biased composition (polar residues). The segment covering 603–620 (TKTEILPDDQQQSKKDSV) has biased composition (basic and acidic residues).

This sequence belongs to the TRAFAC class myosin-kinesin ATPase superfamily. Kinesin family. In terms of assembly, interacts with mal3 and tip1.

It localises to the cytoplasm. It is found in the cytoskeleton. In terms of biological role, promotes microtubule growth, possibly through interactions with the microtubule end, and is important for establishing and maintaining polarized growth along the long axis of the cell. Acts as a kinesin motor protein that moves along microtubules and is required for proper localization of tea1 and tip1 to the cell tips and microtubules, respectively. ATPase activity stimulated via interaction with mal3. This chain is Kinesin-like protein tea2, found in Schizosaccharomyces pombe (strain 972 / ATCC 24843) (Fission yeast).